The sequence spans 878 residues: Multiple RNA-binding domain-containing protein 1 (878 aa).

Residues 2–90 form the RRM 1 domain; that stretch reads SRVIVKGLPI…SKIEVSMAKS (89 aa). Disordered stretches follow at residues 118–143, 159–269, and 287–323; these read LLAD…KHDI, TMKP…AKDE, and GADT…EKSL. Over residues 159 to 177 the composition is skewed to polar residues; it reads TMKPSSQVTSWETVQSSKT. The segment covering 180–190 has biased composition (acidic residues); sequence EDEEAADDEVG. The span at 295 to 304 shows a compositional bias: low complexity; that stretch reads QQQQPDTEQQ. The segment covering 305–319 has biased composition (acidic residues); that stretch reads QPEETEVETSQESEE. 4 RRM domains span residues 330 to 408, 516 to 588, 651 to 734, and 752 to 829; these read GRLF…PADA, RVIL…KGPS, VSIF…LSHR, and GKII…FVEQ. The segment at 732 to 751 is disordered; sequence SHRQGTSTTNASSKKKKKNQ. Residues 852–878 form a disordered region; sequence TKIANMRNSGKRKIDLDEDDENDGLQG. The segment covering 867–878 has biased composition (acidic residues); it reads LDEDDENDGLQG.

Belongs to the RRM MRD1 family.

Its subcellular location is the nucleus. Its function is as follows. Involved in pre-rRNA processing. This chain is Multiple RNA-binding domain-containing protein 1 (MRD1), found in Kluyveromyces lactis (strain ATCC 8585 / CBS 2359 / DSM 70799 / NBRC 1267 / NRRL Y-1140 / WM37) (Yeast).